We begin with the raw amino-acid sequence, 479 residues long: Oxysterol-binding protein homolog C23B6.01c (479 aa).

Phosphoserine is present on residues serine 328, serine 408, serine 409, and serine 421. Basic and acidic residues predominate over residues 404–418; the sequence is KPEDSSIHKHSRDAS. Residues 404-479 form a disordered region; it reads KPEDSSIHKH…KLHEEQDPAL (76 aa). A compositionally biased stretch (polar residues) spans 439-452; the sequence is QSTASFVTYRSDNG. Residues 470–479 show a composition bias toward basic and acidic residues; the sequence is KLHEEQDPAL.

It belongs to the OSBP family.

Its subcellular location is the cytoplasm. The protein localises to the nucleus. This is Oxysterol-binding protein homolog C23B6.01c from Schizosaccharomyces pombe (strain 972 / ATCC 24843) (Fission yeast).